The primary structure comprises 250 residues: Cruxrhodopsin-3 (250 aa).

The Extracellular portion of the chain corresponds to Met1 to Ile9. The chain crosses the membrane as a helical span at residues Trp10–Ala27. At Arg28–Tyr41 the chain is on the cytoplasmic side. The helical transmembrane segment at Ile42–Leu60 threads the bilayer. Over Gly61–Tyr77 the chain is Extracellular. A helical transmembrane segment spans residues Trp78–Asp94. The Cytoplasmic segment spans residues Leu95–Thr105. A helical transmembrane segment spans residues Ile106–Leu125. Residues Ser126–Arg138 are Extracellular-facing. The helical transmembrane segment at Leu139–Ser158 threads the bilayer. Residues Ser159–Lys176 are Cytoplasmic-facing. Residues Thr177 to Val195 traverse the membrane as a helical segment. Residues Gly196–Ile207 lie on the Extracellular side of the membrane. The chain crosses the membrane as a helical span at residues Glu208 to Leu227. Lys220 carries the N6-(retinylidene)lysine modification. Topologically, residues Leu228–Asp250 are cytoplasmic.

It belongs to the archaeal/bacterial/fungal opsin family. As to quaternary structure, homotrimer. Binds bacterioruberin in the crevice between neighboring subunits.

It is found in the cell membrane. In terms of biological role, light-driven proton pump. The sequence is that of Cruxrhodopsin-3 (cop3) from Haloarcula vallismortis (Halobacterium vallismortis).